The following is a 32-amino-acid chain: Photosystem II reaction center protein Z (32 aa).

The chain crosses the membrane as a helical span at residues 9 to 29; the sequence is IIFSGSLIWVFLLIIVGFLNY.

The protein belongs to the PsbZ family. In terms of assembly, PSII is composed of 1 copy each of membrane proteins PsbA, PsbB, PsbC, PsbD, PsbE, PsbF, PsbH, PsbI, PsbJ, PsbK, PsbL, PsbM, PsbT, PsbY, PsbZ, Psb30/Ycf12, at least 3 peripheral proteins of the oxygen-evolving complex and a large number of cofactors. It forms dimeric complexes.

The protein resides in the plastid. It localises to the chloroplast thylakoid membrane. Its function is as follows. May control the interaction of photosystem II (PSII) cores with the light-harvesting antenna, regulates electron flow through the 2 photosystem reaction centers. PSII is a light-driven water plastoquinone oxidoreductase, using light energy to abstract electrons from H(2)O, generating a proton gradient subsequently used for ATP formation. This chain is Photosystem II reaction center protein Z, found in Euglena myxocylindracea.